The sequence spans 483 residues: Protein DETOXIFICATION 6 (483 aa).

Helical transmembrane passes span 38–58 (ALPM…SVMV), 69–89 (GVAL…FGLA), 113–133 (FSAI…WFYM), 146–166 (ISKV…AQAV), 187–207 (AITT…AFGL), 211–231 (GAAL…ALYV), 263–283 (AAMT…SGLL), 292–312 (VLSI…GIGA), 334–354 (VFAG…LLFI), 376–396 (LSPL…LGGV), 405–425 (IGAW…GLFL), and 436–456 (LWIG…IVTA).

It belongs to the multi antimicrobial extrusion (MATE) (TC 2.A.66.1) family.

The protein resides in the membrane. The polypeptide is Protein DETOXIFICATION 6 (Arabidopsis thaliana (Mouse-ear cress)).